The primary structure comprises 535 residues: uncharacterized protein (535 aa).

The chain crosses the membrane as a helical span at residues 17–37 (IVLLCMIGFFCTTFMRIHFAL). 2 N-linked (GlcNAc...) asparagine glycosylation sites follow: asparagine 44 and asparagine 61. The next 6 helical transmembrane spans lie at 107–127 (LIFS…MFFI), 144–164 (ILVT…SVFL), 167–187 (IGMG…IGNW), 199–219 (IFTL…AAVC), 225–245 (WPAT…LWFF), and 292–312 (AFLG…LFQI). A glycan (N-linked (GlcNAc...) asparagine) is linked at asparagine 329. 5 helical membrane passes run 331–351 (TFTA…GIGI), 368–388 (VSHG…AFFV), 395–415 (TGLI…SGFY), 429–451 (MSAI…MSMF), and 463–483 (IFIG…LFGS).

The protein belongs to the major facilitator superfamily. Sodium/anion cotransporter family.

It localises to the membrane. This is an uncharacterized protein from Caenorhabditis elegans.